A 469-amino-acid polypeptide reads, in one-letter code: DNA-binding transcriptional regulator NtrC (469 aa).

The Response regulatory domain maps to 5–119 (IVWVVDDDSS…EAVALVERAI (115 aa)). Residue Asp54 is modified to 4-aspartylphosphate. Positions 140-369 (MIGEAPAMQD…LENTCRWLTV (230 aa)) constitute a Sigma-54 factor interaction domain. Residues 168–175 (GESGTGKE) and 231–240 (ADGGTLFLDE) contribute to the ATP site. Positions 445–464 (KQEAARLLGWGRNTLTRKLK) form a DNA-binding region, H-T-H motif.

In terms of processing, phosphorylated and dephosphorylated by NtrB.

The protein localises to the cytoplasm. Its function is as follows. Member of the two-component regulatory system NtrB/NtrC, which controls expression of the nitrogen-regulated (ntr) genes in response to nitrogen limitation. Phosphorylated NtrC binds directly to DNA and stimulates the formation of open promoter-sigma54-RNA polymerase complexes. This Salmonella typhimurium (strain LT2 / SGSC1412 / ATCC 700720) protein is DNA-binding transcriptional regulator NtrC (glnG).